The primary structure comprises 584 residues: Cation channel sperm-associated protein 2 (584 aa).

Residues 1–106 (MAHERGHLQL…LWAGWVLDSS (106 aa)) lie on the Cytoplasmic side of the membrane. The helical transmembrane segment at 107-129 (IFSNFIISLIFLNTFVLMVEIEL) threads the bilayer. Over 130–138 (MNSTNTSLW) the chain is Extracellular. Residues 139 to 164 (PLKLALEVTDWFILLSFIVEILLMWL) traverse the membrane as a helical segment. At 165–173 (ASFFLFWKN) the chain is on the cytoplasmic side. The helical transmembrane segment at 174-198 (AWSVFDFVVTMLSLLPEFVVLIGVS) threads the bilayer. The Extracellular portion of the chain corresponds to 199 to 201 (ADS). The chain crosses the membrane as a helical span at residues 202–220 (VWLQLLRVSRVLRSLKLFA). Residues 221 to 237 (RFPQIKVILLALVRALK) lie on the Cytoplasmic side of the membrane. Residues 238–260 (SMTFLLMLLLIFFYVFAVAGVYF) traverse the membrane as a helical segment. Over 261 to 279 (FKEYSRSTIENLEYNMFFS) the chain is Extracellular. Residues 280 to 292 (DLLNSLVTVFILF) constitute an intramembrane region (helical; Pore-forming). At 293–312 (TLDHWYAVLQDVWKVPEASR) the chain is on the extracellular side. The chain crosses the membrane as a helical span at residues 313–339 (VFSSIYVILWLLLGSIIFRNIIVAMMV). Residues 340 to 584 (TNFQNIRNEL…VQALMNFEDK (245 aa)) lie on the Cytoplasmic side of the membrane. The segment covering 376–386 (SESLRGTSQGK) has biased composition (polar residues). 2 disordered regions span residues 376-460 (SESL…KGYT) and 480-510 (AGKA…HDEA). Composition is skewed to acidic residues over residues 390–418 (DITE…EEKS) and 426–443 (EKND…EEKS). Composition is skewed to basic and acidic residues over residues 444 to 460 (DVEK…KGYT) and 483 to 496 (AENE…KEKA).

The protein belongs to the cation channel sperm-associated (TC 1.A.1.19) family. In terms of assembly, component of the CatSper complex or CatSpermasome composed of the core pore-forming members CATSPER1, CATSPER2, CATSPER3 and CATSPER4 as well as auxiliary members CATSPERB, CATSPERG, CATSPERD, CATSPERE, CATSPERZ, C2CD6/CATSPERT, SLCO6C1, TMEM249, TMEM262 and EFCAB9. HSPA1 may be an additional auxiliary complex member. The core complex members CATSPER1, CATSPER2, CATSPER3 and CATSPER4 form a heterotetrameric channel. The auxiliary CATSPERB, CATSPERG, CATSPERD and CATSPERE subunits form a pavilion-like structure over the pore which stabilizes the complex through interactions with CATSPER4, CATSPER3, CATSPER1 and CATSPER2 respectively. SLCO6C1 interacts with CATSPERE and TMEM262/CATSPERH interacts with CATSPERB, further stabilizing the complex. C2CD6/CATSPERT interacts at least with CATSPERD and is required for targeting the CatSper complex in the flagellar membrane. Interacts with Ca(v)3.3/CACNA1I, leading to suppression of T-type calcium channel activity.

The protein localises to the cell projection. It is found in the cilium. Its subcellular location is the flagellum membrane. The enzyme catalyses Ca(2+)(in) = Ca(2+)(out). Activated by intracellular alkalinization. Its function is as follows. Pore-forming subunit of the CatSper complex, a sperm-specific voltage-gated calcium channel that plays a central role in sperm cell hyperactivation. Controls calcium entry to mediate the hyperactivated motility, a step needed for sperm motility which is essential late in the preparation of sperm for fertilization. The polypeptide is Cation channel sperm-associated protein 2 (Catsper2) (Rattus norvegicus (Rat)).